Consider the following 197-residue polypeptide: dCTP deaminase (197 aa).

DCTP-binding positions include 110 to 115 (RSSLAR), aspartate 128, 136 to 138 (VLE), tyrosine 171, and glutamine 182. Residue glutamate 138 is the Proton donor/acceptor of the active site.

The protein belongs to the dCTP deaminase family. Homotrimer.

It carries out the reaction dCTP + H2O + H(+) = dUTP + NH4(+). The protein operates within pyrimidine metabolism; dUMP biosynthesis; dUMP from dCTP (dUTP route): step 1/2. In terms of biological role, catalyzes the deamination of dCTP to dUTP. The chain is dCTP deaminase from Alteromonas mediterranea (strain DSM 17117 / CIP 110805 / LMG 28347 / Deep ecotype).